The chain runs to 400 residues: Exodeoxyribonuclease 7 large subunit (400 aa).

Belongs to the XseA family. Heterooligomer composed of large and small subunits.

It is found in the cytoplasm. It catalyses the reaction Exonucleolytic cleavage in either 5'- to 3'- or 3'- to 5'-direction to yield nucleoside 5'-phosphates.. In terms of biological role, bidirectionally degrades single-stranded DNA into large acid-insoluble oligonucleotides, which are then degraded further into small acid-soluble oligonucleotides. In Clostridium perfringens (strain ATCC 13124 / DSM 756 / JCM 1290 / NCIMB 6125 / NCTC 8237 / Type A), this protein is Exodeoxyribonuclease 7 large subunit.